A 126-amino-acid chain; its full sequence is MDVKHIAKQTTKTLISYLTYQAVRTVIGQLAETDPPRSLWLHQFTSQESIQDGERYLEALFREQPDLGFRILTVREHLAEMVADYLPEMLRAGIQQANLQQRCQQLERMTQVSEANVENSNLETPE.

This sequence belongs to the RbcX family. Homodimer. Interacts with the exposed C-terminal peptide of RbcL via its central cleft, contacts a second RbcL monomer via its peripheral polar surface.

The protein resides in the carboxysome. The protein localises to the cytoplasm. Its function is as follows. An RbcL-specific chaperone. Required for assembly of the RbcL8 core. The central cleft of the RbcX homodimer (RbcX2) binds the C-terminus of a RbcL monomer, stabilizing the C-terminus and probably preventing its reassociation with chaperonin GroEL-ES. At the same time the peripheral region of RbcX2 binds a second RbcL monomer, bridging the RbcL homodimers in the correct orientation. The RbcX2(2)-bound RbcL dimers then assemble into the RbcL8 core (RbcL8-(RbcX2)8). RbcS binding triggers the release of RbcX2. In Thermosynechococcus vestitus (strain NIES-2133 / IAM M-273 / BP-1), this protein is RuBisCO chaperone RbcX.